The sequence spans 461 residues: D-phenylhydantoinase (461 aa).

The a divalent metal cation site is built by H59, H61, and K151. The residue at position 151 (K151) is an N6-carboxylysine. Y156 contacts substrate. Residues H182 and H239 each coordinate a divalent metal cation. S286 contacts substrate. D313 lines the a divalent metal cation pocket. N335 provides a ligand contact to substrate.

Belongs to the metallo-dependent hydrolases superfamily. Hydantoinase/dihydropyrimidinase family. As to quaternary structure, homotetramer. The cofactor is Zn(2+). Ni(2+) is required as a cofactor. Co(2+) serves as cofactor. It depends on Mn(2+) as a cofactor. Post-translationally, carboxylation allows a single lysine to coordinate two divalent metal cations.

It carries out the reaction D-5-phenylhydantoin + H2O = N-carbamoyl-D-phenylglycine + H(+). Functionally, catalyzes the stereospecific hydrolysis of the cyclic amide bond of D-hydantoin derivatives with an aromatic side chains at the 5'-position. Has no activity on dihydropyrimidines. The physiological function is unknown. This is D-phenylhydantoinase (hyuA) from Escherichia coli (strain K12).